Here is a 97-residue protein sequence, read N- to C-terminus: Large ribosomal subunit protein bL28 (97 aa).

This sequence belongs to the bacterial ribosomal protein bL28 family.

The protein is Large ribosomal subunit protein bL28 of Sphingopyxis alaskensis (strain DSM 13593 / LMG 18877 / RB2256) (Sphingomonas alaskensis).